The following is a 504-amino-acid chain: ATP synthase subunit alpha 2 (504 aa).

169 to 176 (GDRQTGKT) provides a ligand contact to ATP.

It belongs to the ATPase alpha/beta chains family. As to quaternary structure, F-type ATPases have 2 components, CF(1) - the catalytic core - and CF(0) - the membrane proton channel. CF(1) has five subunits: alpha(3), beta(3), gamma(1), delta(1), epsilon(1). CF(0) has three main subunits: a(1), b(2) and c(9-12). The alpha and beta chains form an alternating ring which encloses part of the gamma chain. CF(1) is attached to CF(0) by a central stalk formed by the gamma and epsilon chains, while a peripheral stalk is formed by the delta and b chains.

The protein resides in the cell membrane. The enzyme catalyses ATP + H2O + 4 H(+)(in) = ADP + phosphate + 5 H(+)(out). In terms of biological role, produces ATP from ADP in the presence of a proton gradient across the membrane. The alpha chain is a regulatory subunit. This Listeria innocua serovar 6a (strain ATCC BAA-680 / CLIP 11262) protein is ATP synthase subunit alpha 2.